The chain runs to 270 residues: tRNA pseudouridine synthase A (270 aa).

The Nucleophile role is filled by D60. The interval 107-111 (FHARF) is RNA binding. Y118 is a binding site for substrate. Positions 168–172 (QCQSR) are interaction with tRNA.

Belongs to the tRNA pseudouridine synthase TruA family. Homodimer.

It carries out the reaction uridine(38/39/40) in tRNA = pseudouridine(38/39/40) in tRNA. Its function is as follows. Formation of pseudouridine at positions 38, 39 and 40 in the anticodon stem and loop of transfer RNAs. The chain is tRNA pseudouridine synthase A from Citrobacter koseri (strain ATCC BAA-895 / CDC 4225-83 / SGSC4696).